We begin with the raw amino-acid sequence, 146 residues long: Hemoglobin subunit beta (146 aa).

V1 is subject to N-acetylvaline. A Globin domain is found at 2 to 146; it reads NLTAAEKTQV…VANALAHKYH (145 aa). T12 is modified (phosphothreonine). An N6-acetyllysine modification is found at K59. H63 provides a ligand contact to heme b. At K82 the chain carries N6-acetyllysine. H92 is a binding site for heme b. C93 carries the S-nitrosocysteine modification. An N6-acetyllysine modification is found at K144.

Belongs to the globin family. As to quaternary structure, heterotetramer of two alpha chains and two beta chains. In terms of tissue distribution, red blood cells.

Its function is as follows. Involved in oxygen transport from the lung to the various peripheral tissues. The protein is Hemoglobin subunit beta (HBB) of Loxodonta africana (African elephant).